The chain runs to 430 residues: UDP-N-acetylmuramoylalanine--D-glutamate ligase (430 aa).

ATP is bound at residue 109 to 115; sequence GTDGKST.

The protein belongs to the MurCDEF family.

It localises to the cytoplasm. It catalyses the reaction UDP-N-acetyl-alpha-D-muramoyl-L-alanine + D-glutamate + ATP = UDP-N-acetyl-alpha-D-muramoyl-L-alanyl-D-glutamate + ADP + phosphate + H(+). The protein operates within cell wall biogenesis; peptidoglycan biosynthesis. Cell wall formation. Catalyzes the addition of glutamate to the nucleotide precursor UDP-N-acetylmuramoyl-L-alanine (UMA). This chain is UDP-N-acetylmuramoylalanine--D-glutamate ligase, found in Thermotoga petrophila (strain ATCC BAA-488 / DSM 13995 / JCM 10881 / RKU-1).